We begin with the raw amino-acid sequence, 347 residues long: Transcription factor JunD (347 aa).

The segment at 1 to 43 (METPFYGDEALSGLGGGASGSGGSFASPGRLFPGAPPTAAAGS) is disordered. Positions 13–23 (GLGGGASGSGG) are enriched in gly residues. Positions 27-39 (SPGRLFPGAPPTA) match the Menin-binding motif (MBM) motif. Residues 46–55 (KKDALTLSLS) carry the MAP kinase docking motif; essential for its phosphorylation motif. The tract at residues 62-86 (LKPAAAPPPTPLRADGAPSAAPPDG) is disordered. Residues 73 to 86 (LRADGAPSAAPPDG) show a composition bias toward low complexity. Phosphoserine is present on serine 90. At serine 100 the chain carries Phosphoserine; by MAPK8. Threonine 117 bears the Phosphothreonine mark. A disordered region spans residues 244-264 (QTVPDVPSFGESPPLSPIDMD). A phosphoserine mark is found at serine 251, serine 255, and serine 259. The basic motif stretch occupies residues 268–295 (RIKAERKRLRNRIAASKCRKRKLERISR). The bZIP domain maps to 268–331 (RIKAERKRLR…AQLKQKVLSH (64 aa)). A leucine-zipper region spans residues 296 to 324 (LEEKVKTLKSQNTELASTASLLREQVAQL).

Belongs to the bZIP family. Jun subfamily. As to quaternary structure, heterodimer; binds DNA as a heterodimer. Component of an AP-1 transcription factor complex composed of JUN-FOS heterodimers. As part of the AP-1 transcription factor complex, forms heterodimers with FOS proteins, thereby binding to the AP-1 consensus sequence and stimulating transcription. Forms heterodimers with FOSB; thereby binding to the AP-1 consensus sequence. Interacts (via MBM motif) with MEN1; this interaction represses transcriptional activation. Interacts with MAPK10; this interaction is inhibited in the presence of MEN1. Phosphorylated by MAP kinases MAPK8 and MAPK10; phosphorylation is inhibited in the presence of MEN1.

It is found in the nucleus. In terms of biological role, transcription factor binding AP-1 sites. Heterodimerizes with proteins of the FOS family to form an AP-1 transcription factor complex, thereby enhancing their DNA binding activity to an AP-1 consensus sequence 3'-TGA[GC]TCA-5' and enhancing their transcriptional activity. In Homo sapiens (Human), this protein is Transcription factor JunD (JUND).